Consider the following 211-residue polypeptide: Large ribosomal subunit protein bL25 (211 aa).

The segment at 186–211 (GRALQSMDAAESAVEQPGEQPATAAG) is disordered.

This sequence belongs to the bacterial ribosomal protein bL25 family. CTC subfamily. As to quaternary structure, part of the 50S ribosomal subunit; part of the 5S rRNA/L5/L18/L25 subcomplex. Contacts the 5S rRNA. Binds to the 5S rRNA independently of L5 and L18.

In terms of biological role, this is one of the proteins that binds to the 5S RNA in the ribosome where it forms part of the central protuberance. The polypeptide is Large ribosomal subunit protein bL25 (Gloeobacter violaceus (strain ATCC 29082 / PCC 7421)).